The sequence spans 419 residues: L-rhamnose isomerase (419 aa).

Residues histidine 262, aspartate 294, and aspartate 296 each coordinate Mn(2+).

This sequence belongs to the rhamnose isomerase family. Homotetramer. It depends on Mn(2+) as a cofactor.

The protein resides in the cytoplasm. The catalysed reaction is L-rhamnopyranose = L-rhamnulose. Its pathway is carbohydrate degradation; L-rhamnose degradation; glycerone phosphate from L-rhamnose: step 1/3. In terms of biological role, catalyzes the interconversion of L-rhamnose and L-rhamnulose. The chain is L-rhamnose isomerase from Shigella sonnei (strain Ss046).